The following is a 56-amino-acid chain: MAACRCCDTSPGITLFPYFAILILILAILVVGTPNQQYHHSPSTYEYKTQHISIAK.

Residues 12-32 (GITLFPYFAILILILAILVVG) form a helical membrane-spanning segment. The interval 19 to 31 (FAILILILAILVV) is hydrophobic.

Its subcellular location is the membrane. This is an uncharacterized protein from Chenopodium amaranticolor (Quinoa).